Reading from the N-terminus, the 1979-residue chain is E3 ubiquitin-protein ligase TTC3 (1979 aa).

The segment at 1-230 (MDDFAEGGLS…RHSCMQCVKQ (230 aa)) is interaction with POLG. TPR repeat units follow at residues 231-264 (GELM…RPEN) and 266-298 (LLYG…KNTW). Serine 378 is subject to Phosphoserine. A disordered region spans residues 422–457 (CDCHPEFLPPPSQPPRHKGKQKSRNNESEKPSFNSE). TPR repeat units lie at residues 536-572 (VLVV…YPNE) and 576-609 (CLAY…ISRL). Residues 783-811 (LAQERMEEDLRESNPPKNEEPEETSDSAQ) are disordered. Serine 1009 carries the phosphoserine modification. Disordered stretches follow at residues 1021–1067 (NKGK…GPFA), 1214–1289 (QPDV…EEAK), 1402–1427 (QGSA…SSDS), 1574–1601 (KNDG…DEKT), 1757–1776 (MDSA…GSPT), 1788–1821 (KGAS…KKPS), and 1873–1927 (DEQK…PAPD). The segment covering 1036–1050 (VGSGAASVAPSSEAV) has biased composition (low complexity). Serine 1060 is modified (phosphoserine). Over residues 1214–1227 (QPDVKSEALSEDVK) the composition is skewed to basic and acidic residues. Low complexity predominate over residues 1248 to 1257 (DSDSSSGSAS). Over residues 1576-1586 (DGFDKECEPHP) the composition is skewed to basic and acidic residues. 2 stretches are compositionally biased toward polar residues: residues 1788-1799 (KGASQVSPSEQS) and 1808-1821 (GQAT…KKPS). Position 1794 is a phosphoserine (serine 1794). Basic and acidic residues predominate over residues 1873 to 1890 (DEQKKKKPNPGKDKKTSE). The RING-type; atypical zinc-finger motif lies at 1931–1971 (CEICHEIFKSKNMRVLKCGHKFHKGCFKQWLKGQSTCPTCG).

As to quaternary structure, interacts (when phosphorylated on Ser-378) with AKT1, AKT2 and AKT3 (when phosphorylated). Interacts with CIT. Interacts with POLG. Interacts with HSP70. Interacts with SMURF2. In terms of processing, phosphorylation on Ser-378 by Akt is required for ubiquitin ligase activity. Post-translationally, proteolytically cleaved into differently sized N- and C-terminal fragments.

The protein resides in the nucleus. It localises to the cytoplasm. The protein localises to the golgi apparatus. It catalyses the reaction S-ubiquitinyl-[E2 ubiquitin-conjugating enzyme]-L-cysteine + [acceptor protein]-L-lysine = [E2 ubiquitin-conjugating enzyme]-L-cysteine + N(6)-ubiquitinyl-[acceptor protein]-L-lysine.. It functions in the pathway protein modification; protein ubiquitination. Its function is as follows. E3 ubiquitin-protein ligase which catalyzes the formation of 'Lys-48'-polyubiquitin chains. Mediates the ubiquitination and subsequent degradation of phosphorylated Akt (AKT1, AKT2 and AKT3) in the nucleus. Acts as a terminal regulator of Akt signaling after activation; its phosphorylation by Akt, which is a prerequisite for ubiquitin ligase activity, suggests the existence of a regulation mechanism required to control Akt levels after activation. Positively regulates TGFB1-induced epithelial-mesenchymal transition and myofibroblast differentiation by mediating the ubiquitination and subsequent degradation of SMURF2. Regulates neuronal differentiation by regulating actin remodeling and Golgi organization via a signaling cascade involving RHOA, CIT and ROCK. Inhibits cell proliferation. The polypeptide is E3 ubiquitin-protein ligase TTC3 (Ttc3) (Mus musculus (Mouse)).